The primary structure comprises 1548 residues: Zinc finger MYM-type protein 4 (1548 aa).

Ala2 carries the post-translational modification N-acetylalanine. Thr107 carries the post-translational modification Phosphothreonine. Phosphoserine is present on residues Ser110 and Ser122. Glycyl lysine isopeptide (Lys-Gly) (interchain with G-Cter in SUMO2) cross-links involve residues Lys140 and Lys149. Ser162 bears the Phosphoserine mark. The segment at 162-189 (SKETFSGKEKNRDLTYEREKRLDKPHKD) is disordered. A Glycyl lysine isopeptide (Lys-Gly) (interchain with G-Cter in SUMO2) cross-link involves residue Lys195. The residue at position 197 (Ser197) is a Phosphoserine. Residues Lys201 and Lys232 each participate in a glycyl lysine isopeptide (Lys-Gly) (interchain with G-Cter in SUMO2) cross-link. Ser242 carries the post-translational modification Phosphoserine. A Glycyl lysine isopeptide (Lys-Gly) (interchain with G-Cter in SUMO1); alternate cross-link involves residue Lys250. A Glycyl lysine isopeptide (Lys-Gly) (interchain with G-Cter in SUMO2); alternate cross-link involves residue Lys250. Residues Lys260, Lys271, Lys273, Lys289, Lys327, Lys400, Lys428, and Lys430 each participate in a glycyl lysine isopeptide (Lys-Gly) (interchain with G-Cter in SUMO2) cross-link. MYM-type zinc fingers lie at residues 362–402 (QLFC…PKDV), 414–457 (KDFC…RHEV), 464–499 (HKLCSDACFSKFRSANNLTMNCCENCGGYCYSGSGQ), 510–544 (KKFCSSSCITAYKQKSAKITPCALCKSLRSSAEMI), 554–592 (ELFCSVNCLSAYRVKMVTSAGVQVQCNSCKTSAIPQYHL), 600–631 (RNFCSYSCVVAFQNLFNKPTGMNSSVVPLSQG), 708–742 (FQFCGKNCSDEYKKINNVMAMCEYCKIEKIVKETV), 749–788 (KSFCSEGCKLLYKHDLAKRWGNHCKMCSYCLQTSPKLVQN), and 795–829 (EEFCCEECMSKYTVLFYQMAKCDACKRQGKLSESL). Ser1030 carries the phosphoserine modification. Glycyl lysine isopeptide (Lys-Gly) (interchain with G-Cter in SUMO2) cross-links involve residues Lys1035 and Lys1061. Ser1064 and Ser1071 each carry phosphoserine. Residues Lys1080 and Lys1127 each participate in a glycyl lysine isopeptide (Lys-Gly) (interchain with G-Cter in SUMO2) cross-link. Residues 1124 to 1134 (SELKQFSKGET) show a composition bias toward basic and acidic residues. Disordered stretches follow at residues 1124-1183 (SELK…KSIV) and 1231-1260 (KCGGVEQASSSPRSDPLGSTQDHALSQESS). The segment covering 1160–1181 (SRTRRRHRDGFPQPRRRGRKKS) has biased composition (basic residues). A phosphoserine mark is found at Ser1181 and Ser1256. A compositionally biased stretch (polar residues) spans 1237 to 1260 (QASSSPRSDPLGSTQDHALSQESS). Lys1431 participates in a covalent cross-link: Glycyl lysine isopeptide (Lys-Gly) (interchain with G-Cter in SUMO2). 3 positions are modified to phosphoserine: Ser1539, Ser1542, and Ser1547.

Expressed at higher level in heart, skeletal muscle, kidney and liver.

Plays a role in the regulation of cell morphology and cytoskeletal organization. This is Zinc finger MYM-type protein 4 (ZMYM4) from Homo sapiens (Human).